The sequence spans 312 residues: Probable N-glycosylase/DNA lyase (312 aa).

Residues 1 to 22 (MRIPVGDFDLEMTQRSGQTSQP) are disordered. Residues 13-22 (TQRSGQTSQP) are compositionally biased toward polar residues. K235 is an active-site residue.

The protein belongs to the type-1 OGG1 family.

The catalysed reaction is 2'-deoxyribonucleotide-(2'-deoxyribose 5'-phosphate)-2'-deoxyribonucleotide-DNA = a 3'-end 2'-deoxyribonucleotide-(2,3-dehydro-2,3-deoxyribose 5'-phosphate)-DNA + a 5'-end 5'-phospho-2'-deoxyribonucleoside-DNA + H(+). In terms of biological role, DNA repair enzyme that incises DNA at 8-oxoG residues. Excises 7,8-dihydro-8-oxoguanine and 2,6-diamino-4-hydroxy-5-N-methylformamidopyrimidine (FAPY) from damaged DNA. Has a beta-lyase activity that nicks DNA 3' to the lesion. The polypeptide is Probable N-glycosylase/DNA lyase (Methanothermobacter thermautotrophicus (strain ATCC 29096 / DSM 1053 / JCM 10044 / NBRC 100330 / Delta H) (Methanobacterium thermoautotrophicum)).